A 474-amino-acid polypeptide reads, in one-letter code: 3-isopropylmalate dehydratase large subunit (474 aa).

3 residues coordinate [4Fe-4S] cluster: C353, C414, and C417.

The protein belongs to the aconitase/IPM isomerase family. LeuC type 1 subfamily. In terms of assembly, heterodimer of LeuC and LeuD. [4Fe-4S] cluster is required as a cofactor.

It catalyses the reaction (2R,3S)-3-isopropylmalate = (2S)-2-isopropylmalate. It functions in the pathway amino-acid biosynthesis; L-leucine biosynthesis; L-leucine from 3-methyl-2-oxobutanoate: step 2/4. In terms of biological role, catalyzes the isomerization between 2-isopropylmalate and 3-isopropylmalate, via the formation of 2-isopropylmaleate. The chain is 3-isopropylmalate dehydratase large subunit from Pseudomonas paraeruginosa (strain DSM 24068 / PA7) (Pseudomonas aeruginosa (strain PA7)).